The primary structure comprises 538 residues: Diacylglycerol O-acyltransferase 1-1 (538 aa).

2 disordered regions span residues 1–39 (MVGSDGDGDGGGGEAHAPAAPAHHHRRPPRPRGGSGAIV) and 54–106 (AAAA…GGGR). Positions 69–83 (EAASGEPSSSSSSSP) are enriched in low complexity. The next 7 helical transmembrane spans lie at 136 to 156 (AIFKQSHAGLFNLCIVVLVAV), 186 to 206 (WPLLMCCLSLPAFPLGAFAVE), 218 to 238 (VATCLHIFLSTTEIVYPVLVI), 245 to 265 (VLSGFLLIFIACIVWLKLVSF), 293 to 313 (NLQPPTLGNLIYFMMAPTLCY), 326 to 346 (GWLIRQIILYLIFTGLQGFII), and 382 to 402 (LWLCMFYAFFHLWLSILAEIL). The FYXDWWN motif motif lies at 409–415 (FYKDWWN). A run of 3 helical transmembrane segments spans residues 451 to 471 (VAVLISFLVSAVLHEICVAVP), 474 to 494 (ILKFWAFLGIMLQIPLIVLTA), and 505 to 525 (VGNMIFWFFFCIYGQPMCLLL). His-464 is a catalytic residue.

It belongs to the membrane-bound acyltransferase family. Sterol o-acyltransferase subfamily.

The protein resides in the endoplasmic reticulum membrane. The catalysed reaction is an acyl-CoA + a 1,2-diacyl-sn-glycerol = a triacyl-sn-glycerol + CoA. It participates in glycerolipid metabolism; triacylglycerol biosynthesis. Involved in triacylglycerol (TAG) synthesis. Catalyzes the acylation of the sn-3 hydroxy group of sn-1,2-diacylglycerol using acyl-CoA. The polypeptide is Diacylglycerol O-acyltransferase 1-1 (Oryza sativa subsp. japonica (Rice)).